We begin with the raw amino-acid sequence, 177 residues long: NADH-quinone oxidoreductase subunit B (177 aa).

[4Fe-4S] cluster-binding residues include cysteine 56, cysteine 57, cysteine 121, and cysteine 151.

The protein belongs to the complex I 20 kDa subunit family. In terms of assembly, NDH-1 is composed of 14 different subunits. Subunits NuoB, C, D, E, F, and G constitute the peripheral sector of the complex. It depends on [4Fe-4S] cluster as a cofactor.

It is found in the cell inner membrane. It catalyses the reaction a quinone + NADH + 5 H(+)(in) = a quinol + NAD(+) + 4 H(+)(out). Its function is as follows. NDH-1 shuttles electrons from NADH, via FMN and iron-sulfur (Fe-S) centers, to quinones in the respiratory chain. Couples the redox reaction to proton translocation (for every two electrons transferred, four hydrogen ions are translocated across the cytoplasmic membrane), and thus conserves the redox energy in a proton gradient. The chain is NADH-quinone oxidoreductase subunit B from Roseobacter denitrificans (strain ATCC 33942 / OCh 114) (Erythrobacter sp. (strain OCh 114)).